The sequence spans 440 residues: Exosome complex component RRP45 (440 aa).

Phosphoserine is present on S65. The residue at position 297 (K297) is an N6-acetyllysine; alternate. Residue K297 forms a Glycyl lysine isopeptide (Lys-Gly) (interchain with G-Cter in SUMO1); alternate linkage. A Glycyl lysine isopeptide (Lys-Gly) (interchain with G-Cter in SUMO2); alternate cross-link involves residue K297. Residues S306 and S346 each carry the phosphoserine modification. Residues 341–362 form a disordered region; that stretch reads EGIENSWGHLEDSEKEDEDEGG. A compositionally biased stretch (acidic residues) spans 353-362; the sequence is SEKEDEDEGG. A phosphoserine mark is found at S393 and S395. A disordered region spans residues 404 to 440; that stretch reads EPDKNPKKIRTQTISATQVKAPSKKPVKKRKKKRAAN. Residues 425 to 440 are compositionally biased toward basic residues; the sequence is PSKKPVKKRKKKRAAN.

This sequence belongs to the RNase PH family. Component of the RNA exosome core complex (Exo-9), composed of EXOSC1, EXOSC2, EXOSC3, EXOSC4, EXOSC5, EXOSC6, EXOSC7, EXOSC8 and EXOSC9; within the complex interacts with EXOSC3, EXOSC4, EXOSC5 and DIS3. The catalytically inactive RNA exosome core complex (Exo-9) associates with the catalytic subunit EXOSC10/RRP6. Exo-9 may associate with DIS3 to form the nucleolar exosome complex, or DIS3L to form the cytoplasmic exosome complex. Exo-9 is formed by a hexameric base ring consisting of the heterodimers EXOSC4-EXOSC9, EXOSC5-EXOSC8 and EXOSC6-EXOSC7, and a cap ring consisting of EXOSC1, EXOSC2 and EXOSC3. The RNA exosome complex associates with cofactors C1D/RRP47, MPHOSPH6/MPP6 and MTREX/MTR4. Interacts (via C-terminus region) with SETX (via N-terminus domain); the interaction enhances SETX sumoylation. Interacts with DIS3; the interaction is direct.

It is found in the cytoplasm. The protein localises to the nucleus. It localises to the nucleolus. The protein resides in the nucleoplasm. Functionally, non-catalytic component of the RNA exosome complex which has 3'-&gt;5' exoribonuclease activity and participates in a multitude of cellular RNA processing and degradation events. In the nucleus, the RNA exosome complex is involved in proper maturation of stable RNA species such as rRNA, snRNA and snoRNA, in the elimination of RNA processing by-products and non-coding 'pervasive' transcripts, such as antisense RNA species and promoter-upstream transcripts (PROMPTs), and of mRNAs with processing defects, thereby limiting or excluding their export to the cytoplasm. The RNA exosome may be involved in Ig class switch recombination (CSR) and/or Ig variable region somatic hypermutation (SHM) by targeting AICDA deamination activity to transcribed dsDNA substrates. In the cytoplasm, the RNA exosome complex is involved in general mRNA turnover and specifically degrades inherently unstable mRNAs containing AU-rich elements (AREs) within their 3' untranslated regions, and in RNA surveillance pathways, preventing translation of aberrant mRNAs. It seems to be involved in degradation of histone mRNA. The catalytic inactive RNA exosome core complex of 9 subunits (Exo-9) is proposed to play a pivotal role in the binding and presentation of RNA for ribonucleolysis, and to serve as a scaffold for the association with catalytic subunits and accessory proteins or complexes. EXOSC9 binds to ARE-containing RNAs. In Bos taurus (Bovine), this protein is Exosome complex component RRP45 (EXOSC9).